The following is a 185-amino-acid chain: Lipopolysaccharide export system protein LptA (185 aa).

The first 27 residues, 1 to 27 (MKFKTNKLSLNLVLASSLLAASIPAFA), serve as a signal peptide directing secretion. Residues 166 to 185 (PSQLQDKNNKGQTPAQKKGN) form a disordered region.

The protein belongs to the LptA family. In terms of assembly, component of the lipopolysaccharide transport and assembly complex.

The protein resides in the periplasm. Its function is as follows. Involved in the assembly of lipopolysaccharide (LPS). Required for the translocation of LPS from the inner membrane to the outer membrane. May form a bridge between the inner membrane and the outer membrane, via interactions with LptC and LptD, thereby facilitating LPS transfer across the periplasm. The chain is Lipopolysaccharide export system protein LptA from Escherichia coli O157:H7.